The following is a 313-amino-acid chain: Malate dehydrogenase (313 aa).

11 to 16 (GAGHTG) is an NAD(+) binding site. 2 residues coordinate substrate: R86 and R92. NAD(+) is bound by residues N99 and 122–124 (LTN). Residues N124 and R155 each contribute to the substrate site. H179 functions as the Proton acceptor in the catalytic mechanism.

This sequence belongs to the LDH/MDH superfamily. MDH type 3 family.

The enzyme catalyses (S)-malate + NAD(+) = oxaloacetate + NADH + H(+). Its function is as follows. Catalyzes the reversible oxidation of malate to oxaloacetate. The polypeptide is Malate dehydrogenase (Staphylococcus epidermidis (strain ATCC 35984 / DSM 28319 / BCRC 17069 / CCUG 31568 / BM 3577 / RP62A)).